A 486-amino-acid polypeptide reads, in one-letter code: Arginine/agmatine antiporter (486 aa).

Transmembrane regions (helical) follow at residues 12-32 (LGAI…GIFS), 41-61 (AGAG…FFIA), 85-105 (GFGP…QIFG), 129-149 (NTIP…FIVL), 161-181 (IGTI…AFFF), 211-231 (STML…VMSA), 242-262 (ATIL…LLPF), 296-316 (IGLL…VAEI), 341-361 (VSLY…YFST), 367-387 (MLSI…AFLV), 418-438 (IWLI…LLAL), and 461-481 (EVTK…LFST).

The protein belongs to the amino acid-polyamine-organocation (APC) superfamily. Basic amino acid/polyamine antiporter (APA) (TC 2.A.3.2) family.

The protein localises to the cell inner membrane. In terms of biological role, catalyzes the exchange of L-arginine for agmatine. The arginine uptake by the bacterium in the macrophage may be a virulence factor against the host innate immune response. The protein is Arginine/agmatine antiporter (aaxC) of Chlamydia felis (strain Fe/C-56) (Chlamydophila felis).